Here is a 76-residue protein sequence, read N- to C-terminus: Translation initiation factor IF-1 (76 aa).

Residues 1–72 (MAKKDVVVMQ…NKGRIVKREK (72 aa)) enclose the S1-like domain.

The protein belongs to the IF-1 family. In terms of assembly, component of the 30S ribosomal translation pre-initiation complex which assembles on the 30S ribosome in the order IF-2 and IF-3, IF-1 and N-formylmethionyl-tRNA(fMet); mRNA recruitment can occur at any time during PIC assembly.

Its subcellular location is the cytoplasm. Functionally, one of the essential components for the initiation of protein synthesis. Stabilizes the binding of IF-2 and IF-3 on the 30S subunit to which N-formylmethionyl-tRNA(fMet) subsequently binds. Helps modulate mRNA selection, yielding the 30S pre-initiation complex (PIC). Upon addition of the 50S ribosomal subunit IF-1, IF-2 and IF-3 are released leaving the mature 70S translation initiation complex. In Petrotoga mobilis (strain DSM 10674 / SJ95), this protein is Translation initiation factor IF-1.